The primary structure comprises 292 residues: Elongation factor Ts (292 aa).

Residues 80-83 (TDFV) are involved in Mg(2+) ion dislocation from EF-Tu.

It belongs to the EF-Ts family.

The protein resides in the cytoplasm. Functionally, associates with the EF-Tu.GDP complex and induces the exchange of GDP to GTP. It remains bound to the aminoacyl-tRNA.EF-Tu.GTP complex up to the GTP hydrolysis stage on the ribosome. The polypeptide is Elongation factor Ts (Psychrobacter sp. (strain PRwf-1)).